Here is a 309-residue protein sequence, read N- to C-terminus: 4-hydroxy-3-methylbut-2-enyl diphosphate reductase (309 aa).

Cys-12 is a binding site for [4Fe-4S] cluster. Residues His-41 and His-74 each contribute to the (2E)-4-hydroxy-3-methylbut-2-enyl diphosphate site. Dimethylallyl diphosphate contacts are provided by His-41 and His-74. 2 residues coordinate isopentenyl diphosphate: His-41 and His-74. Position 96 (Cys-96) interacts with [4Fe-4S] cluster. A (2E)-4-hydroxy-3-methylbut-2-enyl diphosphate-binding site is contributed by His-124. Dimethylallyl diphosphate is bound at residue His-124. Isopentenyl diphosphate is bound at residue His-124. The active-site Proton donor is Glu-126. Thr-167 provides a ligand contact to (2E)-4-hydroxy-3-methylbut-2-enyl diphosphate. Cys-197 contacts [4Fe-4S] cluster. Ser-225, Ser-226, Asn-227, and Ser-269 together coordinate (2E)-4-hydroxy-3-methylbut-2-enyl diphosphate. Dimethylallyl diphosphate contacts are provided by Ser-225, Ser-226, Asn-227, and Ser-269. Isopentenyl diphosphate is bound by residues Ser-225, Ser-226, Asn-227, and Ser-269.

It belongs to the IspH family. [4Fe-4S] cluster is required as a cofactor.

The catalysed reaction is isopentenyl diphosphate + 2 oxidized [2Fe-2S]-[ferredoxin] + H2O = (2E)-4-hydroxy-3-methylbut-2-enyl diphosphate + 2 reduced [2Fe-2S]-[ferredoxin] + 2 H(+). It catalyses the reaction dimethylallyl diphosphate + 2 oxidized [2Fe-2S]-[ferredoxin] + H2O = (2E)-4-hydroxy-3-methylbut-2-enyl diphosphate + 2 reduced [2Fe-2S]-[ferredoxin] + 2 H(+). Its pathway is isoprenoid biosynthesis; dimethylallyl diphosphate biosynthesis; dimethylallyl diphosphate from (2E)-4-hydroxy-3-methylbutenyl diphosphate: step 1/1. It functions in the pathway isoprenoid biosynthesis; isopentenyl diphosphate biosynthesis via DXP pathway; isopentenyl diphosphate from 1-deoxy-D-xylulose 5-phosphate: step 6/6. In terms of biological role, catalyzes the conversion of 1-hydroxy-2-methyl-2-(E)-butenyl 4-diphosphate (HMBPP) into a mixture of isopentenyl diphosphate (IPP) and dimethylallyl diphosphate (DMAPP). Acts in the terminal step of the DOXP/MEP pathway for isoprenoid precursor biosynthesis. This Pseudoalteromonas translucida (strain TAC 125) protein is 4-hydroxy-3-methylbut-2-enyl diphosphate reductase.